Reading from the N-terminus, the 511-residue chain is Piperic acid synthase CYP719A37 (511 aa).

Residues 7 to 27 form a helical membrane-spanning segment; sequence VDPALFSAFVSIIFFFLGMFL. C455 lines the heme pocket.

The protein belongs to the cytochrome P450 family. Requires heme as cofactor. As to expression, specifically expressed in immature fruits and roots. Barely detectable in young leaves and flowering spadices.

The protein localises to the membrane. It localises to the endoplasmic reticulum membrane. The enzyme catalyses (E,E)-feruperate + reduced [NADPH--hemoprotein reductase] + O2 = (E,E)-piperate + oxidized [NADPH--hemoprotein reductase] + 2 H2O + H(+). It functions in the pathway aromatic compound metabolism. In terms of biological role, cytochrome P450 monooxygenase involved in the biosynthesis of aromatic piperamides natural products such as piperine (1-piperoyl-piperidine), the pungent principle contributing, together with several terpenoids, to the aromatic properties of black pepper fruits, and displaying numerous pharmacological activities such as antiproliferative, antitumor, antiangiogenesis, antioxidant, antidiabetic, antiobesity, cardioprotective, antimicrobial, antiaging, and immunomodulatory effects. Catalyzes the conversion of feruperic acid (5-(4-hydroxy-3-methoxyphenyl)-2,4-pentadienoic acid) to piperic acid. Inactive toward ferulic acid and feruperine. The chain is Piperic acid synthase CYP719A37 from Piper nigrum (Black pepper).